Consider the following 147-residue polypeptide: Hemoglobin subunit epsilon (147 aa).

Residues 3–147 (HFTAEEKAAI…VAIALGHKYH (145 aa)) enclose the Globin domain. 2 positions are modified to phosphoserine: Ser14 and Ser51. The heme b site is built by His64 and His93.

Belongs to the globin family. Heterotetramer of two alpha chains and two epsilon chains in early embryonic hemoglobin Gower-2; two zeta chains and two epsilon chains in early embryonic hemoglobin Gower-1. Red blood cells.

Functionally, the epsilon chain is a beta-type chain of early mammalian embryonic hemoglobin. The chain is Hemoglobin subunit epsilon (HBE1) from Alouatta belzebul (Red-handed howler monkey).